A 437-amino-acid chain; its full sequence is Elongation factor Tu, mitochondrial (437 aa).

The transit peptide at 1–38 (MSALLPRLLTRTAFKASGKLLRLSSVISRTFSQTTTSY) directs the protein to the mitochondrion. The 197-residue stretch at 46–242 (KPHVNIGTIG…AVDEYIPTPE (197 aa)) folds into the tr-type G domain. Residues 55–62 (GHVDHGKT) form a G1 region. Residue 55 to 62 (GHVDHGKT) participates in GTP binding. Residues 96–100 (GITIS) are G2. The G3 stretch occupies residues 117-120 (DCPG). Residues 117-121 (DCPGH) and 172-175 (NKVD) contribute to the GTP site. The tract at residues 172–175 (NKVD) is G4. A G5 region spans residues 210-212 (SAL).

It belongs to the TRAFAC class translation factor GTPase superfamily. Classic translation factor GTPase family. EF-Tu/EF-1A subfamily. The precursor is processed in two steps involving mitochondrial intermediate peptidase (MIP) and mitochondrial processing peptidase (MPP).

The protein resides in the mitochondrion. Its pathway is protein biosynthesis; polypeptide chain elongation. Functionally, G-protein that, in its active GTP-bound form, binds to and delivers aminoacyl-tRNA to the A-site of ribosomes during protein biosynthesis. In the presence of a correct codon-anticodon match between the aminoacyl-tRNA and the A-site codon of the ribosome-bound mRNA, the ribosome acts as a GTPase activator and the GTP is hydrolyzed. The inactive GDP-bound form leaves the ribosome and must be recycled before binding another molecule of aminoacyl-tRNA. Required for mitochondrial protein biosynthesis and maintenance of mitochondrial DNA. The polypeptide is Elongation factor Tu, mitochondrial (TUF1) (Saccharomyces cerevisiae (strain ATCC 204508 / S288c) (Baker's yeast)).